The following is a 475-amino-acid chain: Lipoprotein lipase (475 aa).

Positions 1–27 (MESKALLLLALAVWLQSLTASRGGVAA) are cleaved as a signal peptide. The tract at residues 32–53 (RDFIDIESKFALRTPEDTAEDT) is interaction with GPIHBP1. Cys-54 and Cys-67 form a disulfide bridge. Residue Asn-70 is glycosylated (N-linked (GlcNAc...) asparagine). Position 121 is a 3'-nitrotyrosine (Tyr-121). The active-site Nucleophile is the Ser-159. Asp-183 acts as the Charge relay system in catalysis. The residue at position 191 (Tyr-191) is a 3'-nitrotyrosine. Ca(2+)-binding residues include Ala-194, Arg-197, Ser-199, and Asp-202. Cys-243 and Cys-266 are disulfide-bonded. An essential for determining substrate specificity region spans residues 243 to 266 (CNIGEAIRVIAERGLGDVDQLVKC). Residue His-268 is the Charge relay system of the active site. 2 cysteine pairs are disulfide-bonded: Cys-291–Cys-310 and Cys-302–Cys-305. The PLAT domain maps to 341–464 (FHYQVKIHFS…KGKAPAVFVK (124 aa)). Tyr-343 carries the 3'-nitrotyrosine modification. Asn-386 carries N-linked (GlcNAc...) asparagine glycosylation. Positions 417–421 (WSDWW) are important for interaction with lipoprotein particles. An important for heparin binding region spans residues 430–434 (KIRVK). The interval 443 to 467 (IFCSREKVSHLQKGKAPAVFVKCHD) is interaction with GPIHBP1. Cys-445 and Cys-465 are oxidised to a cystine.

The protein belongs to the AB hydrolase superfamily. Lipase family. Homodimer. Interacts with GPIHBP1 with 1:1 stoichiometry. Interacts with APOC2; the interaction activates LPL activity in the presence of lipids. Interaction with heparan sulfate proteoglycans is required to protect LPL against loss of activity. Associates with lipoprotein particles in blood plasma. Interacts with LMF1 and SEL1L; interaction with SEL1L is required to prevent aggregation of newly synthesized LPL in the endoplasmic reticulum (ER), and for normal export of LPL from the ER to the extracellular space. Interacts with SORL1; SORL1 acts as a sorting receptor, promoting LPL localization to endosomes and later to lysosomes, leading to degradation of newly synthesized LPL. In terms of processing, tyrosine nitration after lipopolysaccharide (LPS) challenge down-regulates the lipase activity. In terms of tissue distribution, highest levels in the spinal cord.

It is found in the cell membrane. The protein localises to the secreted. It localises to the extracellular space. Its subcellular location is the extracellular matrix. The catalysed reaction is a triacylglycerol + H2O = a diacylglycerol + a fatty acid + H(+). It carries out the reaction a 1,2-diacyl-sn-glycero-3-phosphocholine + H2O = a 2-acyl-sn-glycero-3-phosphocholine + a fatty acid + H(+). The enzyme catalyses 1,2,3-tri-(9Z-octadecenoyl)-glycerol + H2O = di-(9Z)-octadecenoylglycerol + (9Z)-octadecenoate + H(+). It catalyses the reaction 1,2-di-(9Z-octadecenoyl)-sn-glycero-3-phosphocholine + H2O = (9Z-octadecenoyl)-sn-glycero-3-phosphocholine + (9Z)-octadecenoate + H(+). The catalysed reaction is 1,2,3-tributanoylglycerol + H2O = dibutanoylglycerol + butanoate + H(+). It carries out the reaction 1,2-dihexadecanoyl-sn-glycero-3-phosphocholine + H2O = hexadecanoyl-sn-glycero-3-phosphocholine + hexadecanoate + H(+). Its activity is regulated as follows. The apolipoprotein APOC2 acts as a coactivator of LPL activity. Ca(2+) binding promotes protein stability and formation of the active homodimer. Interaction with GPIHBP1 protects LPL against inactivation by ANGPTL4. Functionally, key enzyme in triglyceride metabolism. Catalyzes the hydrolysis of triglycerides from circulating chylomicrons and very low density lipoproteins (VLDL), and thereby plays an important role in lipid clearance from the blood stream, lipid utilization and storage. Although it has both phospholipase and triglyceride lipase activities it is primarily a triglyceride lipase with low but detectable phospholipase activity. Mediates margination of triglyceride-rich lipoprotein particles in capillaries. Recruited to its site of action on the luminal surface of vascular endothelium by binding to GPIHBP1 and cell surface heparan sulfate proteoglycans. The chain is Lipoprotein lipase (LPL) from Papio anubis (Olive baboon).